Here is a 311-residue protein sequence, read N- to C-terminus: Methionyl-tRNA formyltransferase (311 aa).

A (6S)-5,6,7,8-tetrahydrofolate-binding site is contributed by 110–113; that stretch reads SLLP.

This sequence belongs to the Fmt family.

The enzyme catalyses L-methionyl-tRNA(fMet) + (6R)-10-formyltetrahydrofolate = N-formyl-L-methionyl-tRNA(fMet) + (6S)-5,6,7,8-tetrahydrofolate + H(+). Attaches a formyl group to the free amino group of methionyl-tRNA(fMet). The formyl group appears to play a dual role in the initiator identity of N-formylmethionyl-tRNA by promoting its recognition by IF2 and preventing the misappropriation of this tRNA by the elongation apparatus. The protein is Methionyl-tRNA formyltransferase of Streptococcus equi subsp. zooepidemicus (strain H70).